A 98-amino-acid chain; its full sequence is Small ribosomal subunit protein uS17B (98 aa).

The protein belongs to the universal ribosomal protein uS17 family. In terms of assembly, part of the 30S ribosomal subunit.

In terms of biological role, one of the primary rRNA binding proteins, it binds specifically to the 5'-end of 16S ribosomal RNA. The sequence is that of Small ribosomal subunit protein uS17B from Bacteroides thetaiotaomicron (strain ATCC 29148 / DSM 2079 / JCM 5827 / CCUG 10774 / NCTC 10582 / VPI-5482 / E50).